A 694-amino-acid chain; its full sequence is GRB2-associated-binding protein 1 (694 aa).

Residue S2 is modified to N-acetylserine. One can recognise a PH domain in the interval 5–116 (EVVCSGWLRK…WVRCICDICG (112 aa)). Positions 194–203 (PEPTRTHADS) are enriched in basic and acidic residues. Residues 194-231 (PEPTRTHADSAKSTSSETDCNDNVPSHKNPASSQSKHG) are disordered. Over residues 204-230 (AKSTSSETDCNDNVPSHKNPASSQSKH) the composition is skewed to polar residues. Residues S251, S253, S266, and S304 each carry the phosphoserine modification. A disordered region spans residues 309 to 378 (IPPTPGNTYQ…TDSSYCIPTA (70 aa)). A compositionally biased stretch (polar residues) spans 358-374 (DTCSITRTASDTDSSYC). The residue at position 387 (T387) is a Phosphothreonine. Phosphoserine occurs at positions 402 and 454. Disordered stretches follow at residues 492-532 (PAHM…VKPA) and 560-656 (DSSR…ADER). Polar residues predominate over residues 594–611 (PNLSSEDSNLFGSNSLDG). Phosphotyrosine is present on Y627. The residue at position 638 (T638) is a Phosphothreonine. S651 carries the post-translational modification Phosphoserine. Y659 is modified (phosphotyrosine). Residues 668–694 (LALKSTREAWTDGRQSTESETPAKNVK) are disordered. Residues 672 to 684 (STREAWTDGRQST) show a composition bias toward basic and acidic residues. S683 is modified (phosphoserine). A compositionally biased stretch (polar residues) spans 685–694 (ESETPAKNVK).

The protein belongs to the GAB family. Identified in a complex containing FRS2, GRB2, GAB1, PIK3R1 and SOS1. Forms a tripartite complex containing GAB1, METTL13 and SPRY2. Within the complex interacts with METTL13. Interacts with GRB2 and with other SH2-containing proteins. Interacts with phosphorylated LAT2. Interacts with PTPRJ. Interacts (phosphorylated) with PTPN11. Interacts with HCK. Phosphorylated in response to FGFR1 activation. Phosphorylated on tyrosine residue(s) by the epidermal growth factor receptor (EGFR) and the insulin receptor (INSR). Tyrosine phosphorylation of GAB1 mediates interaction with several proteins that contain SH2 domains. Phosphorylated on tyrosine residues by HCK upon IL6 signaling.

Functionally, adapter protein that plays a role in intracellular signaling cascades triggered by activated receptor-type kinases. Plays a role in FGFR1 signaling. Probably involved in signaling by the epidermal growth factor receptor (EGFR) and the insulin receptor (INSR). Involved in the MET/HGF-signaling pathway. The protein is GRB2-associated-binding protein 1 (GAB1) of Bos taurus (Bovine).